Here is a 234-residue protein sequence, read N- to C-terminus: Demethylmenaquinone methyltransferase (234 aa).

Residues Thr-58, Asp-79, and Asn-106–Ala-107 contribute to the S-adenosyl-L-methionine site.

This sequence belongs to the class I-like SAM-binding methyltransferase superfamily. MenG/UbiE family.

The enzyme catalyses a 2-demethylmenaquinol + S-adenosyl-L-methionine = a menaquinol + S-adenosyl-L-homocysteine + H(+). Its pathway is quinol/quinone metabolism; menaquinone biosynthesis; menaquinol from 1,4-dihydroxy-2-naphthoate: step 2/2. Methyltransferase required for the conversion of demethylmenaquinol (DMKH2) to menaquinol (MKH2). The protein is Demethylmenaquinone methyltransferase of Geobacillus stearothermophilus (Bacillus stearothermophilus).